A 587-amino-acid chain; its full sequence is Thioredoxin domain-containing protein 3 (587 aa).

A Thioredoxin domain is found at 2 to 119; that stretch reads ASKKREVQLQ…VIALIDEEKK (118 aa). A disulfide bond links C39 and C42. NDK regions lie at residues 157-255, 313-453, and 454-587; these read MAVI…PLEE, VQRT…STLA, and LIKP…NFEN.

This sequence in the C-terminal section; belongs to the NDK family. Monomer. In terms of tissue distribution, testis-specific.

The protein localises to the cytoplasm. Functionally, probably required during the final stages of sperm tail maturation in the testis and/or epididymis, where extensive disulfide bonding of fibrous sheath (FS) proteins occurs. In vitro, it has neither nucleoside diphosphate kinase (NDPK) activity nor reducing activity on disulfide bonds. Exhibits a 3'-5' exonuclease activity with a preference for single-stranded DNA, suggesting roles in DNA proofreading and repair. This is Thioredoxin domain-containing protein 3 (Nme8) from Rattus norvegicus (Rat).